The sequence spans 132 residues: MKGIAGREIRGLPLGANIVCADNTGARSISLIDVKAYHGKARRIPAAGVGDMFIASVKKGTPEMRSKVVYAVVIRQKRPYRRPDGTMVEFEDNAAVLVTPDGEVRGSEIKGPVAREAAERWPRIAAIASIIV.

It belongs to the universal ribosomal protein uL14 family. As to quaternary structure, part of the 50S ribosomal subunit. Forms a cluster with proteins L3 and L24e, part of which may contact the 16S rRNA in 2 intersubunit bridges.

In terms of biological role, binds to 23S rRNA. Forms part of two intersubunit bridges in the 70S ribosome. This Thermoplasma volcanium (strain ATCC 51530 / DSM 4299 / JCM 9571 / NBRC 15438 / GSS1) protein is Large ribosomal subunit protein uL14.